We begin with the raw amino-acid sequence, 156 residues long: Protein E6 (156 aa).

Zinc fingers lie at residues 40-76 (CNFC…CRLC) and 113-149 (CHTC…CRQC).

This sequence belongs to the papillomaviridae E6 protein family. Forms homodimers. Interacts with ubiquitin-protein ligase UBE3A/E6-AP; this interaction stimulates UBE3A ubiquitin activity. Interacts with host BAK1.

It is found in the host cytoplasm. The protein localises to the host nucleus. In terms of biological role, plays a major role in the induction and maintenance of cellular transformation. E6 associates with host UBE3A/E6-AP ubiquitin-protein ligase and modulates its activity. Protects host keratinocytes from apoptosis by mediating the degradation of host BAK1. May also inhibit host immune response. The protein is Protein E6 of Homo sapiens (Human).